The following is a 197-amino-acid chain: Peptidyl-tRNA hydrolase (197 aa).

Tyrosine 21 lines the tRNA pocket. The active-site Proton acceptor is histidine 26. Tyrosine 72, asparagine 74, and asparagine 120 together coordinate tRNA.

Belongs to the PTH family. In terms of assembly, monomer.

It localises to the cytoplasm. The catalysed reaction is an N-acyl-L-alpha-aminoacyl-tRNA + H2O = an N-acyl-L-amino acid + a tRNA + H(+). Hydrolyzes ribosome-free peptidyl-tRNAs (with 1 or more amino acids incorporated), which drop off the ribosome during protein synthesis, or as a result of ribosome stalling. In terms of biological role, catalyzes the release of premature peptidyl moieties from peptidyl-tRNA molecules trapped in stalled 50S ribosomal subunits, and thus maintains levels of free tRNAs and 50S ribosomes. The sequence is that of Peptidyl-tRNA hydrolase from Alkalilimnicola ehrlichii (strain ATCC BAA-1101 / DSM 17681 / MLHE-1).